A 191-amino-acid chain; its full sequence is Octanoyltransferase (191 aa).

Positions 10–185 constitute a BPL/LPL catalytic domain; sequence ENSHDEIWLV…NILALLNNPP (176 aa). Substrate-binding positions include 49–56, 116–118, and 129–131; these read RGGQVTYH, SLG, and GLA. Cysteine 147 (acyl-thioester intermediate) is an active-site residue.

The protein belongs to the LipB family.

It is found in the cytoplasm. The enzyme catalyses octanoyl-[ACP] + L-lysyl-[protein] = N(6)-octanoyl-L-lysyl-[protein] + holo-[ACP] + H(+). Its pathway is protein modification; protein lipoylation via endogenous pathway; protein N(6)-(lipoyl)lysine from octanoyl-[acyl-carrier-protein]: step 1/2. Functionally, catalyzes the transfer of endogenously produced octanoic acid from octanoyl-acyl-carrier-protein onto the lipoyl domains of lipoate-dependent enzymes. Lipoyl-ACP can also act as a substrate although octanoyl-ACP is likely to be the physiological substrate. The protein is Octanoyltransferase of Salmonella choleraesuis (strain SC-B67).